The primary structure comprises 162 residues: 2-C-methyl-D-erythritol 2,4-cyclodiphosphate synthase (162 aa).

Positions 8 and 10 each coordinate a divalent metal cation. Residues 8–10 (DVH) and 36–37 (HS) contribute to the 4-CDP-2-C-methyl-D-erythritol 2-phosphate site. An a divalent metal cation-binding site is contributed by histidine 44. Residues 58–60 (DIG), 63–67 (FPDTD), 102–108 (AQAPKMA), 134–137 (TTTE), phenylalanine 141, and arginine 144 contribute to the 4-CDP-2-C-methyl-D-erythritol 2-phosphate site.

This sequence belongs to the IspF family. In terms of assembly, homotrimer. A divalent metal cation is required as a cofactor.

It carries out the reaction 4-CDP-2-C-methyl-D-erythritol 2-phosphate = 2-C-methyl-D-erythritol 2,4-cyclic diphosphate + CMP. The protein operates within isoprenoid biosynthesis; isopentenyl diphosphate biosynthesis via DXP pathway; isopentenyl diphosphate from 1-deoxy-D-xylulose 5-phosphate: step 4/6. Its function is as follows. Involved in the biosynthesis of isopentenyl diphosphate (IPP) and dimethylallyl diphosphate (DMAPP), two major building blocks of isoprenoid compounds. Catalyzes the conversion of 4-diphosphocytidyl-2-C-methyl-D-erythritol 2-phosphate (CDP-ME2P) to 2-C-methyl-D-erythritol 2,4-cyclodiphosphate (ME-CPP) with a corresponding release of cytidine 5-monophosphate (CMP). The sequence is that of 2-C-methyl-D-erythritol 2,4-cyclodiphosphate synthase from Yersinia pseudotuberculosis serotype IB (strain PB1/+).